The primary structure comprises 215 residues: MADLFLDKILVKNNRDQDELDTEREIWERLENRVILLFFAKSRSSQCQEFAPLLKDFFVRLTDEFYVDRSSQLALVYVSLDQSEEEQERFLKDMPKRWLFVPFKDEEFRRNLEAQFSVSRVPVLVVLKPSGHVISFNAVDEVVRLGPPCFKNWQEVSEIIDRSFLLPEFTDDRAGRSMTDPIRRIKYKDETTNEKKKRKHCDDEDEGGGGGTEFF.

In terms of domain architecture, Thioredoxin; atypical spans 1 to 165 (MADLFLDKIL…VSEIIDRSFL (165 aa)). Over residues 185–194 (IKYKDETTNE) the composition is skewed to basic and acidic residues. Positions 185–215 (IKYKDETTNEKKKRKHCDDEDEGGGGGTEFF) are disordered.

This sequence belongs to the nucleoredoxin family.

The protein localises to the cell projection. The protein resides in the cilium. It is found in the photoreceptor outer segment. Its function is as follows. Plays an important role in retinal cone photoreceptor survival. May play a role in cone cell viability, slowing down cone degeneration, does not seem to play a role in degenerating rods. This chain is Nucleoredoxin-like protein 1 (nxnl1), found in Xenopus laevis (African clawed frog).